The primary structure comprises 336 residues: 4-hydroxy-2-oxovalerate aldolase (336 aa).

Positions 4 to 254 (PRLTDTTLRD…NPGLDVLALM (251 aa)) constitute a Pyruvate carboxyltransferase domain. 12–13 (RD) is a binding site for substrate. Mn(2+) is bound at residue aspartate 13. The active-site Proton acceptor is histidine 16. Substrate contacts are provided by serine 166 and histidine 193. Residues histidine 193 and histidine 195 each coordinate Mn(2+). Position 284 (tyrosine 284) interacts with substrate.

It belongs to the 4-hydroxy-2-oxovalerate aldolase family.

The catalysed reaction is (S)-4-hydroxy-2-oxopentanoate = acetaldehyde + pyruvate. This chain is 4-hydroxy-2-oxovalerate aldolase, found in Roseiflexus castenholzii (strain DSM 13941 / HLO8).